A 507-amino-acid polypeptide reads, in one-letter code: Congo red hypersensitive protein 1 (507 aa).

A signal peptide spans 1–22; the sequence is MKVLDLLTVLSASSLLSTFAAA. The 227-residue stretch at 34–260 folds into the GH16 domain; it reads ASSTASCNPL…KVIVTDYSTG (227 aa). An intrachain disulfide couples Cys40 to Cys48. Asn117 carries N-linked (GlcNAc...) asparagine glycosylation. Catalysis depends on Glu134, which acts as the Nucleophile. The active-site Proton donor is Glu138. Glu138 contacts chitin. Residues Asn177 and Asn201 are each glycosylated (N-linked (GlcNAc...) asparagine). Chitin-binding residues include Trp219 and Thr230. Disordered regions lie at residues 329–368 and 381–478; these read SSSASSTVSSSVSSTVSSSSSVSSSSSTSPSSSTATSSKT and SSFE…TNSV. Low complexity-rich tracts occupy residues 381-439 and 451-477; these read SSFE…PVQD and TSSTTQISSKYTSTIQSSSSEASSTNS. Residue Asn482 is the site of GPI-anchor amidated asparagine attachment. Residues 483–507 constitute a propeptide, removed in mature form; sequence GADLAQSLPREGKLFSVLVALLALL.

This sequence belongs to the glycosyl hydrolase 16 family. CRH1 subfamily. Post-translationally, the GPI-anchor is attached to the protein in the endoplasmic reticulum and serves to target the protein to the cell surface. There, the glucosamine-inositol phospholipid moiety is cleaved off and the GPI-modified mannoprotein is covalently attached via its lipidless GPI glycan remnant to the 1,6-beta-glucan of the outer cell wall layer.

It is found in the secreted. The protein resides in the cell wall. It localises to the membrane. The catalysed reaction is Random endo-hydrolysis of N-acetyl-beta-D-glucosaminide (1-&gt;4)-beta-linkages in chitin and chitodextrins.. Dual chitinase/transglycosylase that plays a role in cell wall architecture. Chitinase and transglycosylase activities are coupled. Required for the polysaccharide cross-linking at the septa and the cell wall. More specifically, transfers chitin to both beta(1-3)- and beta(1-6)glucan in the cell wall. The minimal number of intact hexopyranose units required in the molecule of the acceptor oligosaccharide is two and the effectivity of the acceptor increased with the increasing length of its oligosaccharide chain. This is Congo red hypersensitive protein 1 from Saccharomyces cerevisiae (strain ATCC 204508 / S288c) (Baker's yeast).